The sequence spans 271 residues: Urease accessory protein UreD (271 aa).

The protein belongs to the UreD family. As to quaternary structure, ureD, UreF and UreG form a complex that acts as a GTP-hydrolysis-dependent molecular chaperone, activating the urease apoprotein by helping to assemble the nickel containing metallocenter of UreC. The UreE protein probably delivers the nickel.

The protein localises to the cytoplasm. Its function is as follows. Required for maturation of urease via the functional incorporation of the urease nickel metallocenter. The polypeptide is Urease accessory protein UreD (Azorhizobium caulinodans (strain ATCC 43989 / DSM 5975 / JCM 20966 / LMG 6465 / NBRC 14845 / NCIMB 13405 / ORS 571)).